Here is a 186-residue protein sequence, read N- to C-terminus: Holliday junction branch migration complex subunit RuvA (186 aa).

Residues 1–61 (MYRYIKGIVT…EDIFQLYGFK (61 aa)) are domain I. A domain II region spans residues 62–134 (DEETLNLFLK…LKGKLVNDEL (73 aa)). The interval 134 to 137 (LDMQ) is flexible linker. The tract at residues 138 to 186 (LLSDNSKDVAAALEALGYNKKEIAKSLKHVNFDQDLNKALKEALAILLK) is domain III.

This sequence belongs to the RuvA family. Homotetramer. Forms an RuvA(8)-RuvB(12)-Holliday junction (HJ) complex. HJ DNA is sandwiched between 2 RuvA tetramers; dsDNA enters through RuvA and exits via RuvB. An RuvB hexamer assembles on each DNA strand where it exits the tetramer. Each RuvB hexamer is contacted by two RuvA subunits (via domain III) on 2 adjacent RuvB subunits; this complex drives branch migration. In the full resolvosome a probable DNA-RuvA(4)-RuvB(12)-RuvC(2) complex forms which resolves the HJ.

The protein localises to the cytoplasm. In terms of biological role, the RuvA-RuvB-RuvC complex processes Holliday junction (HJ) DNA during genetic recombination and DNA repair, while the RuvA-RuvB complex plays an important role in the rescue of blocked DNA replication forks via replication fork reversal (RFR). RuvA specifically binds to HJ cruciform DNA, conferring on it an open structure. The RuvB hexamer acts as an ATP-dependent pump, pulling dsDNA into and through the RuvAB complex. HJ branch migration allows RuvC to scan DNA until it finds its consensus sequence, where it cleaves and resolves the cruciform DNA. The chain is Holliday junction branch migration complex subunit RuvA from Acholeplasma laidlawii (strain PG-8A).